The primary structure comprises 459 residues: NADH-ubiquinone oxidoreductase chain 4 (459 aa).

12 helical membrane passes run Pro20–Phe42, Met61–Ser81, Leu103–Phe123, Ile148–Leu168, Phe194–Leu214, Pro224–Ile244, Leu257–Met277, Ser284–Ile303, Trp307–Leu329, Ile350–Pro370, Thr392–Ser414, and Leu435–Trp455.

This sequence belongs to the complex I subunit 4 family.

It localises to the mitochondrion membrane. It carries out the reaction a ubiquinone + NADH + 5 H(+)(in) = a ubiquinol + NAD(+) + 4 H(+)(out). Core subunit of the mitochondrial membrane respiratory chain NADH dehydrogenase (Complex I) that is believed to belong to the minimal assembly required for catalysis. Complex I functions in the transfer of electrons from NADH to the respiratory chain. The immediate electron acceptor for the enzyme is believed to be ubiquinone. This Polypterus ornatipinnis (Ornate bichir) protein is NADH-ubiquinone oxidoreductase chain 4 (MT-ND4).